Consider the following 342-residue polypeptide: Ribosomal RNA small subunit methyltransferase H (342 aa).

Residues 42–44 (GGH), aspartate 61, phenylalanine 88, aspartate 119, and glutamine 126 each bind S-adenosyl-L-methionine.

This sequence belongs to the methyltransferase superfamily. RsmH family.

It is found in the cytoplasm. The enzyme catalyses cytidine(1402) in 16S rRNA + S-adenosyl-L-methionine = N(4)-methylcytidine(1402) in 16S rRNA + S-adenosyl-L-homocysteine + H(+). Its function is as follows. Specifically methylates the N4 position of cytidine in position 1402 (C1402) of 16S rRNA. In Corynebacterium jeikeium (strain K411), this protein is Ribosomal RNA small subunit methyltransferase H.